The following is a 209-amino-acid chain: Octanoyltransferase (209 aa).

The BPL/LPL catalytic domain occupies 29–209 (GSGDELVWML…KKSFVKIFGE (181 aa)). Substrate contacts are provided by residues 68–75 (RGGKYTYH), 141–143 (AIG), and 154–156 (GIA). The Acyl-thioester intermediate role is filled by Cys-172.

Belongs to the LipB family.

It localises to the cytoplasm. It catalyses the reaction octanoyl-[ACP] + L-lysyl-[protein] = N(6)-octanoyl-L-lysyl-[protein] + holo-[ACP] + H(+). It functions in the pathway protein modification; protein lipoylation via endogenous pathway; protein N(6)-(lipoyl)lysine from octanoyl-[acyl-carrier-protein]: step 1/2. Functionally, catalyzes the transfer of endogenously produced octanoic acid from octanoyl-acyl-carrier-protein onto the lipoyl domains of lipoate-dependent enzymes. Lipoyl-ACP can also act as a substrate although octanoyl-ACP is likely to be the physiological substrate. The polypeptide is Octanoyltransferase (Neorickettsia sennetsu (strain ATCC VR-367 / Miyayama) (Ehrlichia sennetsu)).